Reading from the N-terminus, the 65-residue chain is DNA-directed RNA polymerase subunit Rpo10 (65 aa).

Residues cysteine 7, cysteine 10, cysteine 44, and cysteine 45 each coordinate Zn(2+).

Belongs to the archaeal Rpo10/eukaryotic RPB10 RNA polymerase subunit family. Part of the RNA polymerase complex. Zn(2+) serves as cofactor.

Its subcellular location is the cytoplasm. The catalysed reaction is RNA(n) + a ribonucleoside 5'-triphosphate = RNA(n+1) + diphosphate. In terms of biological role, DNA-dependent RNA polymerase (RNAP) catalyzes the transcription of DNA into RNA using the four ribonucleoside triphosphates as substrates. The polypeptide is DNA-directed RNA polymerase subunit Rpo10 (Nanoarchaeum equitans (strain Kin4-M)).